The chain runs to 215 residues: Nucleoside triphosphate pyrophosphatase (215 aa).

This sequence belongs to the Maf family. It depends on a divalent metal cation as a cofactor.

Its subcellular location is the cytoplasm. It carries out the reaction a ribonucleoside 5'-triphosphate + H2O = a ribonucleoside 5'-phosphate + diphosphate + H(+). The catalysed reaction is a 2'-deoxyribonucleoside 5'-triphosphate + H2O = a 2'-deoxyribonucleoside 5'-phosphate + diphosphate + H(+). In terms of biological role, nucleoside triphosphate pyrophosphatase. May have a dual role in cell division arrest and in preventing the incorporation of modified nucleotides into cellular nucleic acids. The sequence is that of Nucleoside triphosphate pyrophosphatase from Rickettsia conorii (strain ATCC VR-613 / Malish 7).